A 163-amino-acid polypeptide reads, in one-letter code: S-fimbrial adhesin protein SfaS (163 aa).

A signal peptide spans 1 to 22 (MKLKAIILATGLINCIAFSAQA). A disulfide bridge links Cys-38 with Cys-75. Residues 138–144 (KARAVSK) form an involved in sialic acid binding region.

It belongs to the fimbrial protein family.

The protein resides in the fimbrium. Fimbriae (also called pili), polar filaments radiating from the surface of the bacterium to a length of 0.5-1.5 micrometers and numbering 100-300 per cell, enable bacteria to colonize the epithelium of specific host organs. Functionally, a minor fimbrial subunit, this protein is necessary for full expression of S-specific binding. S-fimbrial adhesins enable pathogenic E.coli causing urinary-tract infections or newborn meningitis to attach to glycoproteins terminating with alpha-sialic acid-(2-3)-beta-Gal. This protein binds to the alpha-sialic acid-(2-3)-beta-Gal and is thus responsible for erythrocyte recognition and hemagglutination. The sequence is that of S-fimbrial adhesin protein SfaS (sfaS) from Escherichia coli O6:K15:H31 (strain 536 / UPEC).